Consider the following 214-residue polypeptide: Charged multivesicular body protein 2b-B (214 aa).

Residues 25–55 adopt a coiled-coil conformation; sequence QRAITRDRAALEKQEKQLEMEIKKMAKTGNK. Positions 178–200 are disordered; the sequence is MAKAPSAAKGLPSTSAAKSKGIS. An MIT-interacting motif motif is present at residues 202–212; the sequence is EEIERQLKALG.

Belongs to the SNF7 family. Probable core component of the endosomal sorting required for transport complex III (ESCRT-III). ESCRT-III components are thought to multimerize to form a flat lattice on the perimeter membrane of the endosome.

The protein localises to the cytoplasm. It localises to the cytosol. Its subcellular location is the late endosome membrane. Functionally, probable core component of the endosomal sorting required for transport complex III (ESCRT-III) which is involved in multivesicular bodies (MVBs) formation and sorting of endosomal cargo proteins into MVBs. MVBs contain intraluminal vesicles (ILVs) that are generated by invagination and scission from the limiting membrane of the endosome and mostly are delivered to lysosomes enabling degradation of membrane proteins, such as stimulated growth factor receptors, lysosomal enzymes and lipids. The chain is Charged multivesicular body protein 2b-B (chmp2b-b) from Xenopus laevis (African clawed frog).